The following is a 640-amino-acid chain: Chaperone protein DnaK (640 aa).

Thr-198 carries the phosphothreonine; by autocatalysis modification. The disordered stretch occupies residues 600 to 640; that stretch reads KTQGAGAEGGEQPHGEQEAGGAAKGEKVVDADFEEVKDDKK. Positions 630-640 are enriched in acidic residues; sequence ADFEEVKDDKK.

Belongs to the heat shock protein 70 family.

Its function is as follows. Acts as a chaperone. The polypeptide is Chaperone protein DnaK (Citrifermentans bemidjiense (strain ATCC BAA-1014 / DSM 16622 / JCM 12645 / Bem) (Geobacter bemidjiensis)).